A 338-amino-acid polypeptide reads, in one-letter code: MAKLVIPSDYDPKMTIRETEKAIRYIRETFQTEFGTAMNLERISAPMFVKKSSGLNDNLSGWEKPVSFTLHDGNEGELQIVHSLAKWKRWALKHYGFSHGEGLFTNMNAIRKDEEVLDNLHSVYVDQWDWEKVIDKSERTEATLRQTVQRIFETIKGMEYHVRALYPQAAYHLPEEISFVTSEELEARWPSLTPSEREDKICQEKGAVFLEHIGGALPLSKKPHDLRAPDYDDWTLNGDLLFWYEPLQRAFEVSSMSIRVDEDRLQEQLKLAGAEDRLDLPFHQALLKGDLPYSIGGGIGQSRLCMLLLGKAHIGEVQASIWPDEIVEKCQAAKIQLL.

It belongs to the class-II aminoacyl-tRNA synthetase family. AsnA subfamily.

It localises to the cytoplasm. It catalyses the reaction L-aspartate + NH4(+) + ATP = L-asparagine + AMP + diphosphate + H(+). Its pathway is amino-acid biosynthesis; L-asparagine biosynthesis; L-asparagine from L-aspartate (ammonia route): step 1/1. This is Aspartate--ammonia ligase from Lactobacillus delbrueckii subsp. bulgaricus (strain ATCC 11842 / DSM 20081 / BCRC 10696 / JCM 1002 / NBRC 13953 / NCIMB 11778 / NCTC 12712 / WDCM 00102 / Lb 14).